Consider the following 104-residue polypeptide: MEQEKIRIKLRAYDHRLLDQSVKQIIETVKRTGGVVKGPIPLPTRKRKWCVLRSPHKFDQSREHFEIREFSRILDIIRFTPQTIEALMEISLPAGVDVEVKMRG.

The protein belongs to the universal ribosomal protein uS10 family. In terms of assembly, part of the 30S ribosomal subunit.

Its function is as follows. Involved in the binding of tRNA to the ribosomes. This Aquifex aeolicus (strain VF5) protein is Small ribosomal subunit protein uS10.